A 261-amino-acid polypeptide reads, in one-letter code: Transmembrane and immunoglobulin domain-containing protein 1 (261 aa).

An N-terminal signal peptide occupies residues 1-26; that stretch reads MVWKITGPLQACQLLLVVLSLPQGRT. An Ig-like C2-type 1 domain is found at 27–113; that stretch reads SSVLTVNGRT…LQRDQTVSVT (87 aa). Topologically, residues 27 to 215 are extracellular; sequence SSVLTVNGRT…DFHLLVKDKV (189 aa). A disulfide bridge connects residues Cys-53 and Cys-102. Residues Asn-57, Asn-82, Asn-92, Asn-117, Asn-157, and Asn-189 are each glycosylated (N-linked (GlcNAc...) asparagine). The Ig-like C2-type 2 domain occupies 121–206; it reads PPLLSGNGFQ…SSSLKMETMD (86 aa). A disulfide bridge connects residues Cys-142 and Cys-194. A helical membrane pass occupies residues 216–236; that stretch reads FVMPAEPIIAACVVVVLTMAF. The Cytoplasmic segment spans residues 237-261; that stretch reads ALFSRRKRIMKLCGKKNDPNSETAL.

Homodimer. Post-translationally, N-glycosylated.

It is found in the cell membrane. It localises to the cytoplasm. Functionally, may control cell-cell adhesion, cell migration and proliferation, cell morphology, and protects renal epithelial cells from oxidative cell injury to promote cell survival. In Mus musculus (Mouse), this protein is Transmembrane and immunoglobulin domain-containing protein 1.